The sequence spans 660 residues: Arginine--tRNA ligase, cytoplasmic (660 aa).

Met-1 is modified (N-acetylmethionine). A could be involved in the assembly of the multisynthetase complex region spans residues 1–72 (MDGLVAQCSA…QAERKRPTKN (72 aa)). Residues 200 to 202 (SPN), His-211, Tyr-384, Asp-388, and Gln-412 each bind L-arginine. Residues 201–212 (PNIAKEMHVGHL) carry the 'HIGH' region motif. Residues 529–543 (NTAAYLLYAFTRIRS) form an interaction with tRNA region.

Belongs to the class-I aminoacyl-tRNA synthetase family. In terms of assembly, interacts (via N-terminus) with AIMP1 (via N-terminus); this stimulates its catalytic activity. Interacts (via N-terminus) with LARS2 (via C-terminus). Monomer. Part of a multisubunit complex that groups tRNA ligases for Arg (RARS1), Asp (DARS1), Gln (QARS1), Ile (IARS1), Leu (LARS1), Lys (KARS1), Met (MARS1) the bifunctional ligase for Glu and Pro (EPRS1) and the auxiliary subunits AIMP1/p43, AIMP2/p38 and EEF1E1/p18. Interacts with QARS1. Part of a complex composed of RARS1, QARS1 and AIMP1. Detected in dorsal root ganglion.

It is found in the cytoplasm. Its subcellular location is the cytosol. The enzyme catalyses tRNA(Arg) + L-arginine + ATP = L-arginyl-tRNA(Arg) + AMP + diphosphate. Its function is as follows. Forms part of a macromolecular complex that catalyzes the attachment of specific amino acids to cognate tRNAs during protein synthesis. Modulates the secretion of AIMP1 and may be involved in generation of the inflammatory cytokine EMAP2 from AIMP1. In Rattus norvegicus (Rat), this protein is Arginine--tRNA ligase, cytoplasmic (Rars1).